The chain runs to 337 residues: tRNA N6-adenosine threonylcarbamoyltransferase (337 aa).

His-110 and His-114 together coordinate Fe cation. Substrate is bound by residues 132–136, Asp-165, Gly-178, Asp-182, and Asn-268; that span reads VVSGG. Asp-293 contacts Fe cation.

The protein belongs to the KAE1 / TsaD family. The cofactor is Fe(2+).

Its subcellular location is the cytoplasm. The enzyme catalyses L-threonylcarbamoyladenylate + adenosine(37) in tRNA = N(6)-L-threonylcarbamoyladenosine(37) in tRNA + AMP + H(+). Functionally, required for the formation of a threonylcarbamoyl group on adenosine at position 37 (t(6)A37) in tRNAs that read codons beginning with adenine. Is involved in the transfer of the threonylcarbamoyl moiety of threonylcarbamoyl-AMP (TC-AMP) to the N6 group of A37, together with TsaE and TsaB. TsaD likely plays a direct catalytic role in this reaction. This is tRNA N6-adenosine threonylcarbamoyltransferase from Sulfurihydrogenibium sp. (strain YO3AOP1).